The following is a 184-amino-acid chain: Putative NAD(P)H nitroreductase HI_1542 (184 aa).

FMN-binding positions include 10-12 (RKS), Arg35, and His39. NAD(+) is bound at residue 122–127 (AAQAQG). 132-134 (WIS) is an FMN binding site.

The protein belongs to the nitroreductase family. Homodimer. Requires FMN as cofactor.

The protein is Putative NAD(P)H nitroreductase HI_1542 of Haemophilus influenzae (strain ATCC 51907 / DSM 11121 / KW20 / Rd).